The following is a 418-amino-acid chain: NADH-quinone oxidoreductase subunit D (418 aa).

This sequence belongs to the complex I 49 kDa subunit family. NDH-1 is composed of 14 different subunits. Subunits NuoB, C, D, E, F, and G constitute the peripheral sector of the complex.

The protein localises to the cell inner membrane. The catalysed reaction is a quinone + NADH + 5 H(+)(in) = a quinol + NAD(+) + 4 H(+)(out). Its function is as follows. NDH-1 shuttles electrons from NADH, via FMN and iron-sulfur (Fe-S) centers, to quinones in the respiratory chain. The immediate electron acceptor for the enzyme in this species is believed to be ubiquinone. Couples the redox reaction to proton translocation (for every two electrons transferred, four hydrogen ions are translocated across the cytoplasmic membrane), and thus conserves the redox energy in a proton gradient. This is NADH-quinone oxidoreductase subunit D from Neisseria meningitidis serogroup C (strain 053442).